Reading from the N-terminus, the 334-residue chain is Adenine deaminase (334 aa).

Residues H17, H19, and H197 each contribute to the Zn(2+) site. The Proton donor role is filled by E200. Position 278 (D278) interacts with Zn(2+). Residue D279 coordinates substrate.

Belongs to the metallo-dependent hydrolases superfamily. Adenosine and AMP deaminases family. Adenine deaminase type 2 subfamily. Zn(2+) serves as cofactor.

It catalyses the reaction adenine + H2O + H(+) = hypoxanthine + NH4(+). Its function is as follows. Catalyzes the hydrolytic deamination of adenine to hypoxanthine. Plays an important role in the purine salvage pathway and in nitrogen catabolism. The protein is Adenine deaminase of Rhodospirillum rubrum (strain ATCC 11170 / ATH 1.1.1 / DSM 467 / LMG 4362 / NCIMB 8255 / S1).